Consider the following 227-residue polypeptide: Cytochrome c oxidase subunit 2 (227 aa).

Over 1–14 the chain is Mitochondrial intermembrane; the sequence is MAYPHQLGFQDATS. A helical transmembrane segment spans residues 15–45; that stretch reads PIMEELLSFHDHTLMIVFLISSLVLYLISLM. The Mitochondrial matrix segment spans residues 46–59; sequence LTTKLTHTSTMDAQ. The helical transmembrane segment at 60 to 87 threads the bilayer; the sequence is EVETVWTILPAIILIMIALPSLRILYMM. Residues 88 to 227 lie on the Mitochondrial intermembrane side of the membrane; it reads DEINNPLLTV…SFENWTTSMT (140 aa). Cu cation-binding residues include histidine 161, cysteine 196, glutamate 198, cysteine 200, histidine 204, and methionine 207. Glutamate 198 provides a ligand contact to Mg(2+).

This sequence belongs to the cytochrome c oxidase subunit 2 family. In terms of assembly, component of the cytochrome c oxidase (complex IV, CIV), a multisubunit enzyme composed of 14 subunits. The complex is composed of a catalytic core of 3 subunits MT-CO1, MT-CO2 and MT-CO3, encoded in the mitochondrial DNA, and 11 supernumerary subunits COX4I, COX5A, COX5B, COX6A, COX6B, COX6C, COX7A, COX7B, COX7C, COX8 and NDUFA4, which are encoded in the nuclear genome. The complex exists as a monomer or a dimer and forms supercomplexes (SCs) in the inner mitochondrial membrane with NADH-ubiquinone oxidoreductase (complex I, CI) and ubiquinol-cytochrome c oxidoreductase (cytochrome b-c1 complex, complex III, CIII), resulting in different assemblies (supercomplex SCI(1)III(2)IV(1) and megacomplex MCI(2)III(2)IV(2)). Found in a complex with TMEM177, COA6, COX18, COX20, SCO1 and SCO2. Interacts with TMEM177 in a COX20-dependent manner. Interacts with COX20. Interacts with COX16. Cu cation serves as cofactor.

Its subcellular location is the mitochondrion inner membrane. It carries out the reaction 4 Fe(II)-[cytochrome c] + O2 + 8 H(+)(in) = 4 Fe(III)-[cytochrome c] + 2 H2O + 4 H(+)(out). Component of the cytochrome c oxidase, the last enzyme in the mitochondrial electron transport chain which drives oxidative phosphorylation. The respiratory chain contains 3 multisubunit complexes succinate dehydrogenase (complex II, CII), ubiquinol-cytochrome c oxidoreductase (cytochrome b-c1 complex, complex III, CIII) and cytochrome c oxidase (complex IV, CIV), that cooperate to transfer electrons derived from NADH and succinate to molecular oxygen, creating an electrochemical gradient over the inner membrane that drives transmembrane transport and the ATP synthase. Cytochrome c oxidase is the component of the respiratory chain that catalyzes the reduction of oxygen to water. Electrons originating from reduced cytochrome c in the intermembrane space (IMS) are transferred via the dinuclear copper A center (CU(A)) of subunit 2 and heme A of subunit 1 to the active site in subunit 1, a binuclear center (BNC) formed by heme A3 and copper B (CU(B)). The BNC reduces molecular oxygen to 2 water molecules using 4 electrons from cytochrome c in the IMS and 4 protons from the mitochondrial matrix. In Georychus capensis (Cape mole rat), this protein is Cytochrome c oxidase subunit 2 (MT-CO2).